The following is a 432-amino-acid chain: MDEAVGDLKQALPCVAESPAVHVEVLQRSGSTAKKEDIKSSVYRLLNRHNIVFGDYVWTEFDDPFLSRNVQSVSIVDTELKAKDPQPIDLSACTIALHIFQLNEEGPSSENLDEETENIIAASHWVLPAAEFHGLWDSLVYDVEVKSHLLDYVMTTVLFSDKNVDSNLITWNRVVLLHGPPGTGKTSLCKALAQKLTIRLSSRYRYGQLIEINSHSLFSKWFSESGKLVTKMFQKIQDLIDDKEALVFVLIDEVESLTAARNACRAGAEPSDAIRVVNAVLTQIDQIKRHSNVVILTTSNITEKIDVAFVDRADIKQYIGPPSAAAIFKIYLSCLEELMKCQIIYPRQQLLTLRELEMIGFIENNVSKLSLLLSEISRKSEGLSGRVLRKLPFLAHALYIQAPSVTIEGFLQALSLAVDKQFEEKKKLSAYV.

At M1 the chain carries N-acetylmethionine. 179-186 (GPPGTGKT) lines the ATP pocket.

This sequence belongs to the AAA ATPase family. PCH2 subfamily. As to quaternary structure, specifically interacts with the ligand binding domain of the thyroid receptor (TR). This interaction does not require the presence of thyroid hormone for its interaction. Interacts with proteasome subunit PSMA8; to participate in meiosis progression during spermatogenesis. Widely expressed, including in testis.

Functionally, plays a key role in chromosome recombination and chromosome structure development during meiosis. Required at early steps in meiotic recombination that leads to non-crossovers pathways. Also needed for efficient completion of homologous synapsis by influencing crossover distribution along the chromosomes affecting both crossovers and non-crossovers pathways. Also required for development of higher-order chromosome structures and is needed for synaptonemal-complex formation. In males, required for efficient synapsis of the sex chromosomes and for sex body formation. Promotes early steps of the DNA double-strand breaks (DSBs) repair process upstream of the assembly of RAD51 complexes. Required for depletion of HORMAD1 and HORMAD2 from synapsed chromosomes. Plays a role in mitotic spindle assembly checkpoint (SAC) activation. The sequence is that of Pachytene checkpoint protein 2 homolog (Trip13) from Mus musculus (Mouse).